A 146-amino-acid polypeptide reads, in one-letter code: Gastrin-releasing peptide (146 aa).

The first 23 residues, 1-23 (MRGREFPLVLLALVLCQAPRGPA), serve as a signal peptide directing secretion. Position 50 is a methionine amide (Met50). The propeptide occupies 54–146 (STGESPYAYE…QHEGRIPQLN (93 aa)). A disordered region spans residues 95–146 (SHQPPQWEPLGIRQSTWDSKDGSNFKDMGPRLKVDGLSAPGSQHEGRIPQLN). A compositionally biased stretch (basic and acidic residues) spans 112 to 128 (DSKDGSNFKDMGPRLKV).

It belongs to the bombesin/neuromedin-B/ranatensin family.

It localises to the secreted. Its subcellular location is the cytoplasmic vesicle. The protein localises to the secretory vesicle lumen. It is found in the cell projection. The protein resides in the neuron projection. Its function is as follows. Stimulates the release of gastrin and other gastrointestinal hormones. Contributes to the perception of prurient stimuli and to the transmission of itch signals in the spinal cord that promote scratching behavior. Contributes primarily to nonhistaminergic itch sensation. In one study, shown to act in the amygdala as part of an inhibitory network which inhibits memory specifically related to learned fear. In another study, shown to act on vasoactive intestinal peptide (VIP)-expressing cells in the auditory cortex, most likely via extrasynaptic diffusion from local and long-range sources, to mediate disinhibition of glutamatergic cells via VIP cell-specific GRPR signaling which leads to enhanced auditory fear memories. Contributes to the regulation of food intake. Inhibits voltage-gated sodium channels but enhances voltage-gated potassium channels in hippocampal neurons. Induces sighing by acting directly on the pre-Botzinger complex, a cluster of several thousand neurons in the ventrolateral medulla responsible for inspiration during respiratory activity. Induces an itch response through activation of receptors present on mast cells, triggering mast cell degranulation. This is Gastrin-releasing peptide (GRP) from Sus scrofa (Pig).